Here is a 95-residue protein sequence, read N- to C-terminus: Co-chaperonin GroES (95 aa).

Belongs to the GroES chaperonin family. Heptamer of 7 subunits arranged in a ring. Interacts with the chaperonin GroEL.

It localises to the cytoplasm. In terms of biological role, together with the chaperonin GroEL, plays an essential role in assisting protein folding. The GroEL-GroES system forms a nano-cage that allows encapsulation of the non-native substrate proteins and provides a physical environment optimized to promote and accelerate protein folding. GroES binds to the apical surface of the GroEL ring, thereby capping the opening of the GroEL channel. In Syntrophotalea carbinolica (strain DSM 2380 / NBRC 103641 / GraBd1) (Pelobacter carbinolicus), this protein is Co-chaperonin GroES.